A 63-amino-acid polypeptide reads, in one-letter code: FKNPECGEPHSLDGSPNGISCRGYFPSWSYNPDAQQCVSFVYGGCGGNNNRFGSQNECEERCI.

Residues 6–62 (CGEPHSLDGSPNGISCRGYFPSWSYNPDAQQCVSFVYGGCGGNNNRFGSQNECEERC) enclose the BPTI/Kunitz inhibitor domain. Cystine bridges form between Cys-6-Cys-62, Cys-21-Cys-45, and Cys-37-Cys-58.

Serine protease inhibitor. This peptide can inhibit, in-vivo, acrosin and, to a lower level, plasma kallikrein. It probably plays a role in Drosophila reproduction. The protein is Male accessory gland serine protease inhibitor (PapD) of Drosophila funebris (Fruit fly).